The following is a 293-amino-acid chain: Rhomboid-like protease 1 (293 aa).

A disordered region spans residues Glu-18–Ala-40. The next 6 membrane-spanning stretches (helical) occupy residues Val-62–Thr-82, Leu-112–Gln-132, Phe-148–Phe-168, Val-174–Thr-194, Leu-217–Leu-237, and Ala-262–Val-282. The Nucleophile role is filled by Ser-177. The active site involves His-232.

The protein belongs to the peptidase S54 family.

Its subcellular location is the cytoplasmic vesicle. The protein localises to the secretory vesicle. It is found in the microneme membrane. The catalysed reaction is Cleaves type-1 transmembrane domains using a catalytic dyad composed of serine and histidine that are contributed by different transmembrane domains.. Serine protease involved in intramembrane proteolysis and the subsequent release of polypeptides from their membrane anchors. Has no detectable activity towards MIC2. The protein is Rhomboid-like protease 1 (ROM1) of Toxoplasma gondii.